Reading from the N-terminus, the 872-residue chain is Paladin (872 aa).

The segment at 1–37 (MGTTASAAQQVPSTVPSSENVQGNGSGSSNVEDRNSL) is disordered. The N-myristoyl glycine moiety is linked to residue Gly2. Residues 186-210 (RRKENLHENLHDLEKGLRAENLELA) are a coiled coil.

This sequence belongs to the paladin family.

Its subcellular location is the cytoplasm. The protein localises to the cytosol. The protein is Paladin (pald1) of Xenopus tropicalis (Western clawed frog).